A 601-amino-acid polypeptide reads, in one-letter code: Glutathione-regulated potassium-efflux system protein KefB (601 aa).

13 helical membrane passes run 4–24 (SDFLLAGVLFLFAAVAAVPLA), 29–49 (IGAVLGYLLAGIAIGPWGLGF), 55–75 (EILHFSELGVVFLMFIIGLEL), 87–107 (IFGVGAAQVLLSAALLAGLLM), 115–135 (AAVVGGIGLAMSSTAMALQLM), 152–172 (VLLFQDLAVIPALALVPLLAG), 177–197 (HFDWMKIGMKVLAFVGMLIGG), 207–227 (FIAASGVREVFTAATLLLVLG), 230–250 (LFMDALGLSMALGTFIAGVLL), 262–282 (AIDPFKGLLLGLFFISVGMSL), 284–304 (LGVLYIHLLWVVISVVVLVAV), 324–344 (MQFAGVLSQGGEFAFVLFSTA), and 356–376 (ALLLVTVTLSMMTTPLLMKLV). Residues 400–519 (KPQVIVVGFG…AGVTQFSRET (120 aa)) form the RCK N-terminal domain.

Belongs to the monovalent cation:proton antiporter 2 (CPA2) transporter (TC 2.A.37) family. KefB subfamily. As to quaternary structure, interacts with the regulatory subunit KefG.

It is found in the cell inner membrane. In terms of biological role, pore-forming subunit of a potassium efflux system that confers protection against electrophiles. Catalyzes K(+)/H(+) antiport. This chain is Glutathione-regulated potassium-efflux system protein KefB, found in Shigella boydii serotype 18 (strain CDC 3083-94 / BS512).